We begin with the raw amino-acid sequence, 402 residues long: Oxysterol-binding protein 12 (402 aa).

The disordered stretch occupies residues 333-366 (NNNNDKETAEEKAKIEEKQRKEESERREKGILWE). Positions 336-366 (NDKETAEEKAKIEEKQRKEESERREKGILWE) are enriched in basic and acidic residues.

This sequence belongs to the OSBP family.

This Dictyostelium discoideum (Social amoeba) protein is Oxysterol-binding protein 12 (osbL).